The following is a 577-amino-acid chain: Adenine deaminase (577 aa).

It belongs to the metallo-dependent hydrolases superfamily. Adenine deaminase family. It depends on Mn(2+) as a cofactor.

The catalysed reaction is adenine + H2O + H(+) = hypoxanthine + NH4(+). The protein is Adenine deaminase of Geobacillus kaustophilus (strain HTA426).